A 30-amino-acid polypeptide reads, in one-letter code: Protein Tat (30 aa).

Positions 1 to 30 (PLPTTRGNPTGPKESKKEVESKTETDPFAW) are disordered. Positions 6–8 (RGN) match the Cell attachment site motif. Residues 13–30 (KESKKEVESKTETDPFAW) are compositionally biased toward basic and acidic residues.

The protein belongs to the lentiviruses Tat family. As to quaternary structure, interacts with host CCNT1. Associates with the P-TEFb complex composed at least of Tat, P-TEFb (CDK9 and CCNT1), TAR RNA, RNA Pol II. Recruits the HATs CREBBP, TAF1/TFIID, EP300, PCAF and GCN5L2. Interacts with host KAT5/Tip60; this interaction targets the latter to degradation. Interacts with the host deacetylase SIRT1. Interacts with host capping enzyme RNGTT; this interaction stimulates RNGTT. Binds to host KDR, and to the host integrins ITGAV/ITGB3 and ITGA5/ITGB1. Interacts with host KPNB1/importin beta-1 without previous binding to KPNA1/importin alpha-1. Interacts with EIF2AK2. Interacts with host nucleosome assembly protein NAP1L1; this interaction may be required for the transport of Tat within the nucleus, since the two proteins interact at the nuclear rim. Interacts with host C1QBP/SF2P32; this interaction involves lysine-acetylated Tat. Interacts with the host chemokine receptors CCR2, CCR3 and CXCR4. Interacts with host DPP4/CD26; this interaction may trigger an anti-proliferative effect. Interacts with host LDLR. Interacts with the host extracellular matrix metalloproteinase MMP1. Interacts with host PRMT6; this interaction mediates Tat's methylation. Interacts with, and is ubiquitinated by MDM2/Hdm2. Interacts with host PSMC3 and HTATIP2. Interacts with STAB1; this interaction may overcome SATB1-mediated repression of IL2 and IL2RA (interleukin) in T cells by binding to the same domain than HDAC1. Interacts (when acetylated on Lys-50 and Lys-51) with human CDK13, thereby increasing HIV-1 mRNA splicing and promoting the production of the doubly spliced HIV-1 protein Nef. In terms of processing, acetylation by EP300, CREBBP, GCN5L2/GCN5 and PCAF regulates the transactivation activity of Tat. EP300-mediated acetylation of Lys-50 promotes dissociation of Tat from the TAR RNA through the competitive binding to PCAF's bromodomain. In addition, the non-acetylated Tat's N-terminus can also interact with PCAF. PCAF-mediated acetylation of Lys-28 enhances Tat's binding to CCNT1. Lys-50 is deacetylated by SIRT1. Post-translationally, phosphorylated by EIF2AK2 on serine and threonine residues adjacent to the basic region important for TAR RNA binding and function. Phosphorylation of Tat by EIF2AK2 is dependent on the prior activation of EIF2AK2 by dsRNA. Asymmetrical arginine methylation by host PRMT6 seems to diminish the transactivation capacity of Tat and affects the interaction with host CCNT1. In terms of processing, polyubiquitination by MDM2 does not target Tat to degradation, but activates its transactivation function and fosters interaction with CCNT1 and TAR RNA.

The protein resides in the host nucleus. Its subcellular location is the host nucleolus. The protein localises to the host cytoplasm. It is found in the secreted. In terms of biological role, transcriptional activator that increases RNA Pol II processivity, thereby increasing the level of full-length viral transcripts. Recognizes a hairpin structure at the 5'-LTR of the nascent viral mRNAs referred to as the transactivation responsive RNA element (TAR) and recruits the cyclin T1-CDK9 complex (P-TEFb complex) that will in turn hyperphosphorylate the RNA polymerase II to allow efficient elongation. The CDK9 component of P-TEFb and other Tat-activated kinases hyperphosphorylate the C-terminus of RNA Pol II that becomes stabilized and much more processive. Other factors such as HTATSF1/Tat-SF1, SUPT5H/SPT5, and HTATIP2 are also important for Tat's function. Besides its effect on RNA Pol II processivity, Tat induces chromatin remodeling of proviral genes by recruiting the histone acetyltransferases (HATs) CREBBP, EP300 and PCAF to the chromatin. This also contributes to the increase in proviral transcription rate, especially when the provirus integrates in transcriptionally silent region of the host genome. To ensure maximal activation of the LTR, Tat mediates nuclear translocation of NF-kappa-B by interacting with host RELA. Through its interaction with host TBP, Tat may also modulate transcription initiation. Tat can reactivate a latently infected cell by penetrating in it and transactivating its LTR promoter. In the cytoplasm, Tat is thought to act as a translational activator of HIV-1 mRNAs. Extracellular circulating Tat can be endocytosed by surrounding uninfected cells via the binding to several surface receptors such as CD26, CXCR4, heparan sulfate proteoglycans (HSPG) or LDLR. Neurons are rarely infected, but they internalize Tat via their LDLR. Endosomal low pH allows Tat to cross the endosome membrane to enter the cytosol and eventually further translocate into the nucleus, thereby inducing severe cell dysfunctions ranging from cell activation to cell death. Through its interaction with nuclear HATs, Tat is potentially able to control the acetylation-dependent cellular gene expression. Tat seems to inhibit the HAT activity of KAT5/Tip60 and TAF1, and consequently modify the expression of specific cellular genes. Modulates the expression of many cellular genes involved in cell survival, proliferation or in coding for cytokines (such as IL10) or cytokine receptors. May be involved in the derepression of host interleukin IL2 expression. Mediates the activation of cyclin-dependent kinases and dysregulation of microtubule network. Tat plays a role in T-cell and neurons apoptosis. Tat induced neurotoxicity and apoptosis probably contribute to neuroAIDS. Host extracellular matrix metalloproteinase MMP1 cleaves Tat and decreases Tat's mediated neurotoxicity. Circulating Tat also acts as a chemokine-like and/or growth factor-like molecule that binds to specific receptors on the surface of the cells, affecting many cellular pathways. In the vascular system, Tat binds to ITGAV/ITGB3 and ITGA5/ITGB1 integrins dimers at the surface of endothelial cells and competes with bFGF for heparin-binding sites, leading to an excess of soluble bFGF. Binds to KDR/VEGFR-2. All these Tat-mediated effects enhance angiogenesis in Kaposi's sarcoma lesions. The chain is Protein Tat from Human immunodeficiency virus type 1 group M subtype A (isolate Z321) (HIV-1).